Reading from the N-terminus, the 705-residue chain is Elongation factor G (705 aa).

One can recognise a tr-type G domain in the interval 8–294 (ELYRNFGIMA…SVIDYLPSPL (287 aa)). GTP contacts are provided by residues 17-24 (AHIDAGKT), 92-96 (DTPGH), and 146-149 (NKMD).

This sequence belongs to the TRAFAC class translation factor GTPase superfamily. Classic translation factor GTPase family. EF-G/EF-2 subfamily.

It is found in the cytoplasm. Catalyzes the GTP-dependent ribosomal translocation step during translation elongation. During this step, the ribosome changes from the pre-translocational (PRE) to the post-translocational (POST) state as the newly formed A-site-bound peptidyl-tRNA and P-site-bound deacylated tRNA move to the P and E sites, respectively. Catalyzes the coordinated movement of the two tRNA molecules, the mRNA and conformational changes in the ribosome. This is Elongation factor G from Cereibacter sphaeroides (strain KD131 / KCTC 12085) (Rhodobacter sphaeroides).